Consider the following 171-residue polypeptide: MRDFYLFLGAVFLLVLGVWAYNAYKEHKINSFKEISYKVYLFEKGKLKKEEILKITKGTPFYPYVLAKFGNFQEIYEDIEEENMKKFYKERLSADFYLNKKYGKALENLKEIKKEDFNYPSAKSLEAFSYEKLGKINKALSLWSAIKEEYPNTYFGNLSQVKIFLLKEKER.

The N-terminal stretch at 1–20 (MRDFYLFLGAVFLLVLGVWA) is a signal peptide.

This is an uncharacterized protein from Aquifex aeolicus (strain VF5).